The chain runs to 79 residues: UPF0180 protein BCAH820_1484 (79 aa).

This sequence belongs to the UPF0180 family.

This Bacillus cereus (strain AH820) protein is UPF0180 protein BCAH820_1484.